Here is a 245-residue protein sequence, read N- to C-terminus: Probable phosphatase YcdX (245 aa).

The Zn(2+) site is built by H7, H9, H15, H40, E73, H101, H131, D192, and H194.

Belongs to the PHP family. Homotrimer. The cofactor is Zn(2+).

This is Probable phosphatase YcdX from Salmonella heidelberg (strain SL476).